Consider the following 145-residue polypeptide: D-aminoacyl-tRNA deacylase (145 aa).

The Gly-cisPro motif, important for rejection of L-amino acids signature appears at 137-138 (GP).

The protein belongs to the DTD family. Homodimer.

The protein resides in the cytoplasm. The enzyme catalyses glycyl-tRNA(Ala) + H2O = tRNA(Ala) + glycine + H(+). The catalysed reaction is a D-aminoacyl-tRNA + H2O = a tRNA + a D-alpha-amino acid + H(+). An aminoacyl-tRNA editing enzyme that deacylates mischarged D-aminoacyl-tRNAs. Also deacylates mischarged glycyl-tRNA(Ala), protecting cells against glycine mischarging by AlaRS. Acts via tRNA-based rather than protein-based catalysis; rejects L-amino acids rather than detecting D-amino acids in the active site. By recycling D-aminoacyl-tRNA to D-amino acids and free tRNA molecules, this enzyme counteracts the toxicity associated with the formation of D-aminoacyl-tRNA entities in vivo and helps enforce protein L-homochirality. This Pseudomonas fluorescens (strain ATCC BAA-477 / NRRL B-23932 / Pf-5) protein is D-aminoacyl-tRNA deacylase.